A 3432-amino-acid polypeptide reads, in one-letter code: Genome polyprotein (3432 aa).

The interval 2-15 (TKKPGGPGKNRAIN) is interaction with host EXOC1. The Cytoplasmic portion of the chain corresponds to 2–109 (TKKPGGPGKN…KKQNKRGGNE (108 aa)). Positions 37–72 (LLDGRGPVRFVLALITFFKFTALAPTKALLGRWRAV) are hydrophobic; homodimerization of capsid protein C. The propeptide at 106-127 (GGNESSIMWLASLAIVIACAGA) is ER anchor for the capsid protein C, removed in mature form by serine protease NS3. Residues 110-130 (SSIMWLASLAIVIACAGAMKL) form a helical membrane-spanning segment. The Extracellular segment spans residues 131–253 (SNFQGKLLMT…ATRYLMKTEN (123 aa)). Asn142 is a glycosylation site (N-linked (GlcNAc...) asparagine; by host). The helical transmembrane segment at 254–274 (WIIRNPGYAFLAAALGWMLGS) threads the bilayer. Over 275–279 (NSGQR) the chain is Cytoplasmic. The chain crosses the membrane as a helical span at residues 280–294 (VVFTILLLLVAPAYS). Residues 295–746 (FNCLGMGNRD…QVFGGAFRTL (452 aa)) lie on the Extracellular side of the membrane. 6 cysteine pairs are disulfide-bonded: Cys297–Cys324, Cys354–Cys410, Cys354–Cys415, Cys368–Cys399, Cys386–Cys410, and Cys386–Cys415. Positions 392-405 (DRGWGNGCGLFGKG) are fusion peptide. The N-linked (GlcNAc...) asparagine; by host glycan is linked to Asn448. 2 disulfide bridges follow: Cys484-Cys581 and Cys598-Cys629. A helical membrane pass occupies residues 747-767 (FGGMSWITQGLMGALLLWMGV). Residues 768 to 773 (NARDRS) are Cytoplasmic-facing. The chain crosses the membrane as a helical span at residues 774–794 (IALAFLATGGVLVFLATNVHA). The Extracellular segment spans residues 795-1219 (DTGCAIDITR…AFAEANSGGD (425 aa)). 6 disulfides stabilise this stretch: Cys798/Cys809, Cys849/Cys937, Cys973/Cys1017, Cys1074/Cys1123, Cys1085/Cys1106, and Cys1107/Cys1110. N-linked (GlcNAc...) asparagine; by host glycans are attached at residues Asn924 and Asn1001. A helical transmembrane segment spans residues 1220–1240 (VLHLALIAVFKIQPAFLVMNM). Residues 1241–1250 (LSARWTNQEN) are Cytoplasmic-facing. A helical membrane pass occupies residues 1251 to 1271 (MVLVLGAAFFQLASVDLQIGV). Residue His1272 is a topological domain, lumenal. Residues 1273–1293 (GILNAAAIAWMIVRAITFPTT) traverse the membrane as a helical segment. Residues 1294-1309 (STVAMPVLALLTPGMR) are Cytoplasmic-facing. Residues 1310–1330 (ALYLDTYRIILLVIGICSLLQ) traverse the membrane as a helical segment. Over 1331–1341 (ERRKTMAKKKG) the chain is Lumenal. Residues 1342–1362 (AVLLGLALTSTGWFSPTTIAA) traverse the membrane as a helical segment. Residues 1363-1374 (GLMVCNPNKKRG) lie on the Cytoplasmic side of the membrane. A helical transmembrane segment spans residues 1375–1395 (WPATEFLSAVGLMFAIVGGLA). Over 1396 to 1398 (ELD) the chain is Lumenal. Residues 1399 to 1419 (IESMSIPFMLAGLMAVSYVIS) form a helical membrane-spanning segment. The Cytoplasmic portion of the chain corresponds to 1420–1476 (GKATDMWLDRAADISWEMEAAITGSSRRLDVKLDDDGDFHLIDDPGVPWKVWLLRMS). The segment at 1427–1466 (LDRAADISWEMEAAITGSSRRLDVKLDDDGDFHLIDDPGV) is interacts with and activates NS3 protease. An intramembrane region (helical) is located at residues 1477-1497 (CIGLAALTPWAIVPAAFGYWL). The Cytoplasmic portion of the chain corresponds to 1498–2173 (TLKTTKRGGV…RMALEELPDA (676 aa)). Positions 1505–1682 (GGVFWDTPSP…DRQEEPVPDA (178 aa)) constitute a Peptidase S7 domain. Catalysis depends on charge relay system; for serine protease NS3 activity residues His1555, Asp1579, and Ser1639. In terms of domain architecture, Helicase ATP-binding spans 1685-1841 (PSMLKKRQMT…DSNAPIHDLQ (157 aa)). Residues 1689–1692 (KKRQ) form an important for RNA-binding region. 1698-1705 (LHPGSGKT) contacts ATP. The short motif at 1789-1792 (DEAH) is the DEAH box element. The 166-residue stretch at 1852–2017 (GYEWITEYAG…GLVAQLYGPE (166 aa)) folds into the Helicase C-terminal domain. Lys1893 is subject to N6-acetyllysine; by host. The segment at 1950–1969 (NPSPITSASAAQRRGRVGRN) is disordered. Positions 2168-2172 (EELPD) are regulates the ATPase activity of NS3 helicase. Residues 2174–2194 (LETITLIVAITVMTGGFFLLM) traverse the membrane as a helical segment. At 2195–2199 (MQRKG) the chain is on the lumenal side. An intramembrane region (helical) is located at residues 2200 to 2220 (IGKMGLGALVLTLATFFLWAA). Glu2221 is a topological domain (lumenal). A helical transmembrane segment spans residues 2222–2242 (VPGTKIAGTLLVALLLMVVLI). Residues 2243–2257 (PEPEKQRSQTDNQLA) are Cytoplasmic-facing. A helical transmembrane segment spans residues 2258-2278 (VFLICVLTVVGVVAANEYGML). Residues 2279 to 2311 (EKTKADLKSMFGGRTQAPGLTGLPSMALDLRPA) are Lumenal-facing. Positions 2312-2332 (TAWALYGGSTVVLTPLLKHLI) form an intramembrane region, helical. The Lumenal portion of the chain corresponds to 2333–2368 (TSEYVTTSLASISSQAGSLFVLPRGVPFTDLDLTVG). Residues 2369–2389 (LVFLGCWGQITLTTFLTAMVL) traverse the membrane as a helical segment. The Cytoplasmic segment spans residues 2390–2444 (VTLHYGYMLPGWQAEALRAAQRRTAAGIMKNAVVDGMVATDVPELERTTPLMQKK). Residues 2445–2465 (VGQVLLIGVSVAAFLVNPNVT) traverse the membrane as a helical segment. The Lumenal portion of the chain corresponds to 2466-2469 (TVRE). A helical transmembrane segment spans residues 2470–2490 (AGVLVTAATLTLWDNGASAVW). Over 2491-3432 (NSTTATGLCH…DVLIQEDRVI (942 aa)) the chain is Cytoplasmic. In terms of domain architecture, mRNA cap 0-1 NS5-type MT spans 2528-2793 (GRPGGRTLGE…DVNLGSGTRA (266 aa)). Ser2583 is a binding site for S-adenosyl-L-methionine. Ser2583 is subject to Phosphoserine. Catalysis depends on Lys2588, which acts as the For 2'-O-MTase activity. Gly2613, Trp2614, Thr2631, Lys2632, Asp2658, and Val2659 together coordinate S-adenosyl-L-methionine. Asp2673 (for 2'-O-MTase activity) is an active-site residue. Ile2674 serves as a coordination point for S-adenosyl-L-methionine. Residues Lys2709 and Glu2745 each act as for 2'-O-MTase activity in the active site. Tyr2747 lines the S-adenosyl-L-methionine pocket. The Zn(2+) site is built by Glu2967, His2971, Cys2976, and Cys2979. The RdRp catalytic domain maps to 3057–3209 (GKMYADDTAG…KPLDDRFATA (153 aa)). The Zn(2+) site is built by His3244, Cys3260, and Cys3379.

The protein in the N-terminal section; belongs to the class I-like SAM-binding methyltransferase superfamily. mRNA cap 0-1 NS5-type methyltransferase family. In terms of assembly, homodimer. Interacts (via N-terminus) with host EXOC1 (via C-terminus); this interaction results in EXOC1 degradation through the proteasome degradation pathway. As to quaternary structure, forms heterodimers with envelope protein E in the endoplasmic reticulum and Golgi. Homodimer; in the endoplasmic reticulum and Golgi. Interacts with protein prM. Interacts with non-structural protein 1. Interacts with host HSPA5. In terms of assembly, homodimer; Homohexamer when secreted. Interacts with envelope protein E. NS1 interacts with NS4B. Interacts with host complement protein CFH; this interaction leads to the degradation of C3. As to quaternary structure, interacts (via N-terminus) with serine protease NS3. Forms a heterodimer with serine protease NS3. May form homooligomers. In terms of assembly, forms a heterodimer with NS2B. Interacts with non-structural protein 2A (via N-terminus). Interacts with NS4B. Interacts with unphosphorylated RNA-directed RNA polymerase NS5; this interaction stimulates RNA-directed RNA polymerase NS5 guanylyltransferase activity. Interacts with host ILF2. As to quaternary structure, interacts with serine protease NS3. Homodimer. Interacts with host STAT2; this interaction inhibits the phosphorylation of the latter, and, when all viral proteins are present (polyprotein), targets STAT2 for degradation. Interacts with serine protease NS3. It depends on Mn(2+) as a cofactor. The cofactor is Mg(2+). Specific enzymatic cleavages in vivo yield mature proteins. Cleavages in the lumen of endoplasmic reticulum are performed by host signal peptidase, whereas cleavages in the cytoplasmic side are performed by serine protease NS3. Signal cleavage at the 2K-4B site requires a prior NS3 protease-mediated cleavage at the 4A-2K site. Post-translationally, cleaved in post-Golgi vesicles by a host furin, releasing the mature small envelope protein M, and peptide pr. This cleavage is incomplete as up to 30% of viral particles still carry uncleaved prM. In terms of processing, N-glycosylated. N-glycosylated. The excreted form is glycosylated and this is required for efficient secretion of the protein from infected cells. Post-translationally, acetylated by host KAT5. Acetylation modulates NS3 RNA-binding and unwinding activities and plays an important positive role for viral replication. In terms of processing, phosphorylated on serines residues. This phosphorylation may trigger NS5 nuclear localization.

It is found in the host endoplasmic reticulum membrane. The protein localises to the virion. Its subcellular location is the host nucleus. The protein resides in the host cytoplasm. It localises to the host perinuclear region. It is found in the secreted. The protein localises to the virion membrane. Its subcellular location is the host cell surface. It carries out the reaction Selective hydrolysis of -Xaa-Xaa-|-Yaa- bonds in which each of the Xaa can be either Arg or Lys and Yaa can be either Ser or Ala.. The catalysed reaction is a ribonucleoside 5'-triphosphate + H2O = a ribonucleoside 5'-diphosphate + phosphate + H(+). It catalyses the reaction RNA(n) + a ribonucleoside 5'-triphosphate = RNA(n+1) + diphosphate. The enzyme catalyses ATP + H2O = ADP + phosphate + H(+). It carries out the reaction a 5'-end (5'-triphosphoguanosine)-ribonucleoside in mRNA + S-adenosyl-L-methionine = a 5'-end (N(7)-methyl 5'-triphosphoguanosine)-ribonucleoside in mRNA + S-adenosyl-L-homocysteine. The catalysed reaction is a 5'-end (N(7)-methyl 5'-triphosphoguanosine)-ribonucleoside in mRNA + S-adenosyl-L-methionine = a 5'-end (N(7)-methyl 5'-triphosphoguanosine)-(2'-O-methyl-ribonucleoside) in mRNA + S-adenosyl-L-homocysteine + H(+). Its function is as follows. Plays a role in virus budding by binding to the cell membrane and gathering the viral RNA into a nucleocapsid that forms the core of a mature virus particle. During virus entry, may induce genome penetration into the host cytoplasm after hemifusion induced by the surface proteins. Can migrate to the cell nucleus where it modulates host functions. Overcomes the anti-viral effects of host EXOC1 by sequestering and degrading the latter through the proteasome degradation pathway. Inhibits RNA silencing by interfering with host Dicer. In terms of biological role, prevents premature fusion activity of envelope proteins in trans-Golgi by binding to envelope protein E at pH6.0. After virion release in extracellular space, gets dissociated from E dimers. Functionally, acts as a chaperone for envelope protein E during intracellular virion assembly by masking and inactivating envelope protein E fusion peptide. prM is the only viral peptide matured by host furin in the trans-Golgi network probably to avoid catastrophic activation of the viral fusion activity in acidic Golgi compartment prior to virion release. prM-E cleavage is inefficient, and many virions are only partially matured. These uncleaved prM would play a role in immune evasion. Its function is as follows. May play a role in virus budding. Exerts cytotoxic effects by activating a mitochondrial apoptotic pathway through M ectodomain. May display a viroporin activity. Binds to host cell surface receptor and mediates fusion between viral and cellular membranes. Efficient virus attachment to cell is, at least in part, mediated by host HSPA5. Envelope protein is synthesized in the endoplasmic reticulum in the form of heterodimer with protein prM. They play a role in virion budding in the ER, and the newly formed immature particle is covered with 60 spikes composed of heterodimer between precursor prM and envelope protein E. The virion is transported to the Golgi apparatus where the low pH causes dissociation of PrM-E heterodimers and formation of E homodimers. prM-E cleavage is inefficient, and many virions are only partially matured. These uncleaved prM would play a role in immune evasion. In terms of biological role, involved in immune evasion, pathogenesis and viral replication. Once cleaved off the polyprotein, is targeted to three destinations: the viral replication cycle, the plasma membrane and the extracellular compartment. Essential for viral replication. Required for formation of the replication complex and recruitment of other non-structural proteins to the ER-derived membrane structures. Excreted as a hexameric lipoparticle that plays a role against host immune response. Antagonizing the complement function. Binds to the host macrophages and dendritic cells. Inhibits signal transduction originating from Toll-like receptor 3 (TLR3). Functionally, component of the viral RNA replication complex that functions in virion assembly and antagonizes the host alpha/beta interferon antiviral response. Its function is as follows. Required cofactor for the serine protease function of NS3. May have membrane-destabilizing activity and form viroporins. Displays three enzymatic activities: serine protease, NTPase and RNA helicase. NS3 serine protease, in association with NS2B, performs its autocleavage and cleaves the polyprotein at dibasic sites in the cytoplasm: C-prM, NS2A-NS2B, NS2B-NS3, NS3-NS4A, NS4A-2K and NS4B-NS5. NS3 RNA helicase binds RNA and unwinds dsRNA in the 3' to 5' direction. In terms of biological role, regulates the ATPase activity of the NS3 helicase activity. NS4A allows NS3 helicase to conserve energy during unwinding. Functionally, functions as a signal peptide for NS4B and is required for the interferon antagonism activity of the latter. Its function is as follows. Induces the formation of ER-derived membrane vesicles where the viral replication takes place. Inhibits interferon (IFN)-induced host STAT1 phosphorylation and nuclear translocation, thereby preventing the establishment of cellular antiviral state by blocking the IFN-alpha/beta pathway. Inhibits STAT2 translocation in the nucleus after IFN-alpha treatment. Replicates the viral (+) and (-) RNA genome. Performs the capping of genomes in the cytoplasm. NS5 methylates viral RNA cap at guanine N-7 and ribose 2'-O positions. Besides its role in RNA genome replication, also prevents the establishment of cellular antiviral state by blocking the interferon-alpha/beta (IFN-alpha/beta) signaling pathway. Inhibits host TYK2 and STAT2 phosphorylation, thereby preventing activation of JAK-STAT signaling pathway. This chain is Genome polyprotein, found in Japanese encephalitis virus (strain M28) (JEV).